Here is a 741-residue protein sequence, read N- to C-terminus: D-(-)-3-hydroxybutyrate oligomer hydrolase (741 aa).

The signal sequence occupies residues 1–23 (MKTIQGKSPGRWYSRGMLLAAMA). A disordered region spans residues 45–68 (NGNAGGNGNNNGNNNGNTVSNTKP). Ser338 acts as the Charge relay system in catalysis.

Belongs to the D-(-)-3-hydroxybutyrate oligomer hydrolase family.

The protein resides in the secreted. It carries out the reaction (3R)-hydroxybutanoate dimer + H2O = 2 (R)-3-hydroxybutanoate + H(+). The protein operates within lipid metabolism; butanoate metabolism. Its function is as follows. Participates in the degradation of poly-3-hydroxybutyrate (PHB). It works downstream of poly(3-hydroxybutyrate) depolymerase, hydrolyzing D(-)-3-hydroxybutyrate oligomers of various length (3HB-oligomers) into 3HB-monomers. The sequence is that of D-(-)-3-hydroxybutyrate oligomer hydrolase from Ralstonia pickettii (Burkholderia pickettii).